The sequence spans 335 residues: tRNA-splicing endonuclease (335 aa).

Active-site residues include Y269, H280, and K311.

This sequence belongs to the tRNA-intron endonuclease family. Archaeal long subfamily. As to quaternary structure, homodimer.

The enzyme catalyses pretRNA = a 3'-half-tRNA molecule with a 5'-OH end + a 5'-half-tRNA molecule with a 2',3'-cyclic phosphate end + an intron with a 2',3'-cyclic phosphate and a 5'-hydroxyl terminus.. Functionally, endonuclease that removes tRNA introns. Cleaves pre-tRNA at the 5'- and 3'-splice sites to release the intron. The products are an intron and two tRNA half-molecules bearing 2',3' cyclic phosphate and 5'-OH termini. Recognizes a pseudosymmetric substrate in which 2 bulged loops of 3 bases are separated by a stem of 4 bp. This chain is tRNA-splicing endonuclease, found in Haloarcula marismortui (strain ATCC 43049 / DSM 3752 / JCM 8966 / VKM B-1809) (Halobacterium marismortui).